We begin with the raw amino-acid sequence, 650 residues long: DNA mismatch repair protein MutL (650 aa).

The segment at 374-420 (SSLPDTQRSQRQPEKAASGQRSSVDAGLSQGSSAHRASQTGLGQSGN) is disordered. Positions 392–420 (GQRSSVDAGLSQGSSAHRASQTGLGQSGN) are enriched in polar residues.

The protein belongs to the DNA mismatch repair MutL/HexB family.

Functionally, this protein is involved in the repair of mismatches in DNA. It is required for dam-dependent methyl-directed DNA mismatch repair. May act as a 'molecular matchmaker', a protein that promotes the formation of a stable complex between two or more DNA-binding proteins in an ATP-dependent manner without itself being part of a final effector complex. This chain is DNA mismatch repair protein MutL, found in Shewanella amazonensis (strain ATCC BAA-1098 / SB2B).